The sequence spans 207 residues: Large ribosomal subunit protein uL4 (207 aa).

A disordered region spans residues 48-70; that stretch reads KAQKTRSEVSGGGAKPWRQKGTG.

It belongs to the universal ribosomal protein uL4 family. Part of the 50S ribosomal subunit.

Its function is as follows. One of the primary rRNA binding proteins, this protein initially binds near the 5'-end of the 23S rRNA. It is important during the early stages of 50S assembly. It makes multiple contacts with different domains of the 23S rRNA in the assembled 50S subunit and ribosome. Functionally, forms part of the polypeptide exit tunnel. The protein is Large ribosomal subunit protein uL4 of Francisella tularensis subsp. mediasiatica (strain FSC147).